A 444-amino-acid chain; its full sequence is Spermidine/putrescine import ATP-binding protein PotA (444 aa).

The ABC transporter domain occupies I11 to I332. Position 43–50 (G43–T50) interacts with ATP. Positions R111–R201 are insert.

It belongs to the ABC transporter superfamily. Spermidine/putrescine importer (TC 3.A.1.11.1) family. In terms of assembly, the complex is composed of two ATP-binding proteins (PotA), two transmembrane proteins (PotB and PotC) and a solute-binding protein (PotD).

Its subcellular location is the cell membrane. It carries out the reaction ATP + H2O + polyamine-[polyamine-binding protein]Side 1 = ADP + phosphate + polyamineSide 2 + [polyamine-binding protein]Side 1.. Its function is as follows. Part of the ABC transporter complex PotABCD involved in spermidine/putrescine import. Responsible for energy coupling to the transport system. The protein is Spermidine/putrescine import ATP-binding protein PotA of Mesomycoplasma hyopneumoniae (strain 232) (Mycoplasma hyopneumoniae).